Reading from the N-terminus, the 365-residue chain is 2-aminoethylphosphonate--pyruvate transaminase (365 aa).

Lysine 194 bears the N6-(pyridoxal phosphate)lysine mark.

This sequence belongs to the class-V pyridoxal-phosphate-dependent aminotransferase family. PhnW subfamily. As to quaternary structure, homodimer. Pyridoxal 5'-phosphate serves as cofactor.

The enzyme catalyses (2-aminoethyl)phosphonate + pyruvate = phosphonoacetaldehyde + L-alanine. Functionally, involved in phosphonate degradation. In Bacillus cereus (strain Q1), this protein is 2-aminoethylphosphonate--pyruvate transaminase.